A 439-amino-acid polypeptide reads, in one-letter code: Ribosomal protein uS12 methylthiotransferase RimO (439 aa).

One can recognise an MTTase N-terminal domain in the interval 7-119 (KQLCLISLGC…IDIMIAKKQN (113 aa)). Residues cysteine 16, cysteine 50, cysteine 82, cysteine 151, cysteine 155, and cysteine 158 each contribute to the [4Fe-4S] cluster site. The 232-residue stretch at 137-368 (TGSSVHAYVK…ALKHQNHSFK (232 aa)) folds into the Radical SAM core domain.

Belongs to the methylthiotransferase family. RimO subfamily. [4Fe-4S] cluster is required as a cofactor.

The protein resides in the cytoplasm. The enzyme catalyses L-aspartate(89)-[ribosomal protein uS12]-hydrogen + (sulfur carrier)-SH + AH2 + 2 S-adenosyl-L-methionine = 3-methylsulfanyl-L-aspartate(89)-[ribosomal protein uS12]-hydrogen + (sulfur carrier)-H + 5'-deoxyadenosine + L-methionine + A + S-adenosyl-L-homocysteine + 2 H(+). Functionally, catalyzes the methylthiolation of an aspartic acid residue of ribosomal protein uS12. The polypeptide is Ribosomal protein uS12 methylthiotransferase RimO (Helicobacter pylori (strain ATCC 700392 / 26695) (Campylobacter pylori)).